The primary structure comprises 137 residues: MRNFDLSPLYRSAIGFDRLFNLLENNQSQSNGGYPPYNVELVDENHYRIAIAVAGFAESELEITAQDNLLVVKGAHADEQKERTYLYQGIAERNFERKFQLAENIHVRGANLVNGLLYIELERVIPEANKPRRIEIN.

The 110-residue stretch at 28–137 folds into the sHSP domain; the sequence is SQSNGGYPPY…ANKPRRIEIN (110 aa).

It belongs to the small heat shock protein (HSP20) family. In terms of assembly, monomer. Forms homomultimers of about 100-150 subunits at optimal growth temperatures. Conformation changes to monomers at high temperatures or high ionic concentrations.

The protein resides in the cytoplasm. Associates with aggregated proteins, together with IbpB, to stabilize and protect them from irreversible denaturation and extensive proteolysis during heat shock and oxidative stress. Aggregated proteins bound to the IbpAB complex are more efficiently refolded and reactivated by the ATP-dependent chaperone systems ClpB and DnaK/DnaJ/GrpE. Its activity is ATP-independent. This is Small heat shock protein IbpA from Salmonella choleraesuis (strain SC-B67).